Consider the following 701-residue polypeptide: 2-isopropylmalate synthase (701 aa).

The interval 1–40 (MTTSESPDAYTESFGAHTIVKPAGPPRVGQPSWNPQRASS) is disordered. The span at 31-40 (PSWNPQRASS) shows a compositional bias: polar residues. Positions 72–346 (PLWCAVDLRD…DPQIDFSNID (275 aa)) constitute a Pyruvate carboxyltransferase domain. Residues aspartate 81, histidine 285, histidine 287, and asparagine 321 each contribute to the Mg(2+) site. The tract at residues 491 to 701 (PVRPLERIRQ…VVSAVNRAAR (211 aa)) is regulatory domain. The VNTR1 repeat unit spans residues 575–593 (VTIASPAQPGEAGRHASDP). Positions 581-670 (AQPGEAGRHA…EAGRHASDPV (90 aa)) are disordered. A VNTR2 repeat occupies 594–612 (VTIASPAQPGEAGRHASDP). The VNTR3 repeat unit spans residues 613–631 (VTIASPAQPGEAGRHASDP). The stretch at 632–650 (VTIASPAQPGEAGRHASDP) is one VNTR4 repeat. A VNTR5 repeat occupies 651-669 (VTIASPAQPGEAGRHASDP).

It belongs to the alpha-IPM synthase/homocitrate synthase family. LeuA type 2 subfamily. Homodimer. Mg(2+) serves as cofactor.

The protein resides in the cytoplasm. The catalysed reaction is 3-methyl-2-oxobutanoate + acetyl-CoA + H2O = (2S)-2-isopropylmalate + CoA + H(+). It functions in the pathway amino-acid biosynthesis; L-leucine biosynthesis; L-leucine from 3-methyl-2-oxobutanoate: step 1/4. Its function is as follows. Catalyzes the condensation of the acetyl group of acetyl-CoA with 3-methyl-2-oxobutanoate (2-ketoisovalerate) to form 3-carboxy-3-hydroxy-4-methylpentanoate (2-isopropylmalate). The chain is 2-isopropylmalate synthase from Mycobacterium bovis (strain ATCC BAA-935 / AF2122/97).